A 452-amino-acid polypeptide reads, in one-letter code: Inner membrane metabolite transport protein YdjE (452 aa).

Topologically, residues Met1–His20 are cytoplasmic. The chain crosses the membrane as a helical span at residues Tyr21–Val43. Topologically, residues Val44–Phe57 are periplasmic. Residues Leu58–Ile80 form a helical membrane-spanning segment. At Gly81 to Arg91 the chain is on the cytoplasmic side. A helical transmembrane segment spans residues Ile92–Ile114. At Phe115–Arg117 the chain is on the periplasmic side. A helical membrane pass occupies residues Phe118–Pro140. The Cytoplasmic portion of the chain corresponds to Ala141 to Ser152. The chain crosses the membrane as a helical span at residues Phe153–Trp175. Residues Arg176–Met178 are Periplasmic-facing. A helical transmembrane segment spans residues Phe179–Ile198. Topologically, residues Glu199–Val265 are cytoplasmic. The helical transmembrane segment at Ala266–Phe288 threads the bilayer. Topologically, residues Val289–Lys297 are periplasmic. Residues Ser298–Ile320 traverse the membrane as a helical segment. Residues Asp321–Arg326 lie on the Cytoplasmic side of the membrane. Residues Leu327 to Ser344 form a helical membrane-spanning segment. Topologically, residues Ile345–Leu353 are periplasmic. Residues Ile354 to Pro376 form a helical membrane-spanning segment. The Cytoplasmic portion of the chain corresponds to Glu377 to Ser388. A helical membrane pass occupies residues Gly389–Thr411. The Periplasmic segment spans residues His412–Ser415. Residues Ile416–Ile438 form a helical membrane-spanning segment. Over Glu439–Asn452 the chain is Cytoplasmic.

This sequence belongs to the major facilitator superfamily. Sugar transporter (TC 2.A.1.1) family.

Its subcellular location is the cell inner membrane. This Escherichia coli (strain K12) protein is Inner membrane metabolite transport protein YdjE (ydjE).